We begin with the raw amino-acid sequence, 383 residues long: Dephospho-CoA kinase (383 aa).

Positions arginine 3–leucine 201 constitute a DPCK domain. Residue glycine 11 to threonine 16 participates in ATP binding. Residues proline 196 to valine 383 form a UPF0157 region.

It in the N-terminal section; belongs to the CoaE family. In the C-terminal section; belongs to the UPF0157 (GrpB) family.

The protein resides in the cytoplasm. It carries out the reaction 3'-dephospho-CoA + ATP = ADP + CoA + H(+). It functions in the pathway cofactor biosynthesis; coenzyme A biosynthesis; CoA from (R)-pantothenate: step 5/5. Catalyzes the phosphorylation of the 3'-hydroxyl group of dephosphocoenzyme A to form coenzyme A. The polypeptide is Dephospho-CoA kinase (Nocardia farcinica (strain IFM 10152)).